A 340-amino-acid polypeptide reads, in one-letter code: Phosphate acyltransferase (340 aa).

The protein belongs to the PlsX family. In terms of assembly, homodimer. Probably interacts with PlsY.

The protein localises to the cytoplasm. The enzyme catalyses a fatty acyl-[ACP] + phosphate = an acyl phosphate + holo-[ACP]. It functions in the pathway lipid metabolism; phospholipid metabolism. In terms of biological role, catalyzes the reversible formation of acyl-phosphate (acyl-PO(4)) from acyl-[acyl-carrier-protein] (acyl-ACP). This enzyme utilizes acyl-ACP as fatty acyl donor, but not acyl-CoA. This is Phosphate acyltransferase from Helicobacter pylori (strain HPAG1).